A 133-amino-acid chain; its full sequence is Small ribosomal subunit protein uS8 (133 aa).

The protein belongs to the universal ribosomal protein uS8 family. In terms of assembly, part of the 30S ribosomal subunit. Contacts proteins S5 and S12.

In terms of biological role, one of the primary rRNA binding proteins, it binds directly to 16S rRNA central domain where it helps coordinate assembly of the platform of the 30S subunit. The chain is Small ribosomal subunit protein uS8 from Lachnoclostridium phytofermentans (strain ATCC 700394 / DSM 18823 / ISDg) (Clostridium phytofermentans).